Here is a 731-residue protein sequence, read N- to C-terminus: Gelsolin (731 aa).

Residues 2–125 (VVEHPEFLKA…YKKGGVASGF (124 aa)) are actin-severing. The stretch at 25–107 (FDLVPVPPNL…VQGFESATFL (83 aa)) is one Gelsolin-like 1 repeat. Position 35 is a phosphotyrosine (Tyr35). Ca(2+) is bound by residues Gly41, Asp42, Glu73, Asp85, Gly90, and Ala92. The tract at residues 72–75 (DESG) is actin-actin interfilament contact point. 111-118 (KSGLKYKK) is an a 1,2-diacyl-sn-glycero-3-phospho-(1D-myo-inositol-4,5-bisphosphate) binding site. Val121 serves as a coordination point for Ca(2+). Residue 137 to 145 (RLFQVKGRR) coordinates a 1,2-diacyl-sn-glycero-3-phospho-(1D-myo-inositol-4,5-bisphosphate). The Gelsolin-like 2 repeat unit spans residues 147–219 (VRATEVPVSW…SEEGAEPEAM (73 aa)). Ca(2+)-binding residues include Gly162 and Asp163. A disulfide bridge links Cys164 with Cys177. A Ca(2+)-binding site is contributed by Glu185. Over residues 197-211 (RDNERSGRARVHVSE) the composition is skewed to basic and acidic residues. A disordered region spans residues 197 to 216 (RDNERSGRARVHVSEEGAEP). Positions 235, 278, 279, and 303 each coordinate Ca(2+). The Gelsolin-like 3 repeat unit spans residues 266-338 (DENPFAQGAL…LPEGGETPLF (73 aa)). Tyr358 and Tyr414 each carry phosphotyrosine. The interval 383–731 (AAQHGMDDDG…LDRALAELAA (349 aa)) is actin-binding, Ca-sensitive. One copy of the Gelsolin-like 4 repeat lies at 404–485 (SDKVPVDPAT…VQGKEPAHLM (82 aa)). The Ca(2+) site is built by Gly420, Asp421, Glu451, Asp463, Gly468, Pro470, and Thr500. One copy of the Gelsolin-like 5 repeat lies at 527-591 (AVEVMPKAGA…AEGSEPDSFW (65 aa)). An N6-acetyllysine modification is found at Lys533. Ca(2+)-binding residues include Asn540 and Asp541. Tyr552 carries the post-translational modification Phosphotyrosine. Glu563 contacts Ca(2+). The residue at position 600 (Tyr600) is a Phosphotyrosine. The stretch at 630 to 705 (IEEVPGELMQ…VKQGFEPPSF (76 aa)) is one Gelsolin-like 6 repeat. Positions 645, 646, and 668 each coordinate Ca(2+). Thr691 carries the phosphothreonine modification.

Belongs to the villin/gelsolin family. Binds to actin and to fibronectin. Identified in a complex composed of ACTA1, COBL, GSN and TMSB4X. Interacts with the inactive form of EIF2AK2/PKR. Interacts with FLII.

Its subcellular location is the cytoplasm. The protein localises to the cytoskeleton. Its function is as follows. Calcium-regulated, actin-modulating protein that binds to the plus (or barbed) ends of actin monomers or filaments, preventing monomer exchange (end-blocking or capping). It can promote the assembly of monomers into filaments (nucleation) as well as sever filaments already formed. Plays a role in ciliogenesis. In Bos taurus (Bovine), this protein is Gelsolin (GSN).